Here is a 498-residue protein sequence, read N- to C-terminus: Glycerol kinase (498 aa).

Thr-12 is an ADP binding site. ATP contacts are provided by Thr-12, Thr-13, and Ser-14. Thr-12 contributes to the sn-glycerol 3-phosphate binding site. ADP is bound at residue Arg-16. Positions 82, 134, and 243 each coordinate sn-glycerol 3-phosphate. 4 residues coordinate glycerol: Arg-82, Tyr-134, Asp-243, and Gln-244. The ADP site is built by Thr-265 and Gly-308. Residues Thr-265, Gly-308, Gln-312, and Gly-411 each contribute to the ATP site. Position 411 (Gly-411) interacts with ADP.

The protein belongs to the FGGY kinase family.

It catalyses the reaction glycerol + ATP = sn-glycerol 3-phosphate + ADP + H(+). Its pathway is polyol metabolism; glycerol degradation via glycerol kinase pathway; sn-glycerol 3-phosphate from glycerol: step 1/1. With respect to regulation, inhibited by fructose 1,6-bisphosphate (FBP). Key enzyme in the regulation of glycerol uptake and metabolism. Catalyzes the phosphorylation of glycerol to yield sn-glycerol 3-phosphate. This is Glycerol kinase from Brucella suis (strain ATCC 23445 / NCTC 10510).